The chain runs to 476 residues: Siroheme synthase (476 aa).

Positions 1–207 are precorrin-2 dehydrogenase /sirohydrochlorin ferrochelatase; the sequence is MTANVLFPLF…QRHAEAEAVL (207 aa). NAD(+) is bound by residues 25 to 26 and 46 to 47; these read KV and PS. Phosphoserine is present on S132. Residues 220-476 are uroporphyrinogen-III C-methyltransferase; it reads GSVTLVGAGA…SAPCPPALIL (257 aa). D252 acts as the Proton acceptor in catalysis. Catalysis depends on K274, which acts as the Proton donor. Residues 305-307, V310, 335-336, M387, and G416 contribute to the S-adenosyl-L-methionine site; these read GGD and TA.

It in the N-terminal section; belongs to the precorrin-2 dehydrogenase / sirohydrochlorin ferrochelatase family. The protein in the C-terminal section; belongs to the precorrin methyltransferase family.

The catalysed reaction is uroporphyrinogen III + 2 S-adenosyl-L-methionine = precorrin-2 + 2 S-adenosyl-L-homocysteine + H(+). It catalyses the reaction precorrin-2 + NAD(+) = sirohydrochlorin + NADH + 2 H(+). The enzyme catalyses siroheme + 2 H(+) = sirohydrochlorin + Fe(2+). It participates in cofactor biosynthesis; adenosylcobalamin biosynthesis; precorrin-2 from uroporphyrinogen III: step 1/1. Its pathway is cofactor biosynthesis; adenosylcobalamin biosynthesis; sirohydrochlorin from precorrin-2: step 1/1. The protein operates within porphyrin-containing compound metabolism; siroheme biosynthesis; precorrin-2 from uroporphyrinogen III: step 1/1. It functions in the pathway porphyrin-containing compound metabolism; siroheme biosynthesis; siroheme from sirohydrochlorin: step 1/1. It participates in porphyrin-containing compound metabolism; siroheme biosynthesis; sirohydrochlorin from precorrin-2: step 1/1. Functionally, multifunctional enzyme that catalyzes the SAM-dependent methylations of uroporphyrinogen III at position C-2 and C-7 to form precorrin-2 via precorrin-1. Then it catalyzes the NAD-dependent ring dehydrogenation of precorrin-2 to yield sirohydrochlorin. Finally, it catalyzes the ferrochelation of sirohydrochlorin to yield siroheme. This Xylella fastidiosa (strain 9a5c) protein is Siroheme synthase.